Consider the following 419-residue polypeptide: Probable pectate lyase C (419 aa).

The signal sequence occupies residues 1 to 19 (MRLTPSLISCLSLLHFTSA). 3 N-linked (GlcNAc...) asparagine glycosylation sites follow: Asn-48, Asn-164, and Asn-201. The active site involves Arg-204. An EF-hand domain is found at 261 to 296 (NENFHAYVETNYYDSDKDGTLNGSELGVDSTNYGGM). Positions 274, 276, 278, and 280 each coordinate Ca(2+). N-linked (GlcNAc...) asparagine glycosylation occurs at Asn-282. A Ca(2+)-binding site is contributed by Glu-285. The tract at residues 352-395 (ISDEADMGGAGDLDQGTTPTDTDGDGIPDDAEAELGTDPNTADS) is disordered. Over residues 363 to 372 (DLDQGTTPTD) the composition is skewed to low complexity. The span at 373 to 386 (TDGDGIPDDAEAEL) shows a compositional bias: acidic residues.

It belongs to the polysaccharide lyase 1 family. Requires Ca(2+) as cofactor.

The protein resides in the secreted. The enzyme catalyses Eliminative cleavage of (1-&gt;4)-alpha-D-galacturonan to give oligosaccharides with 4-deoxy-alpha-D-galact-4-enuronosyl groups at their non-reducing ends.. Functionally, pectinolytic enzyme consist of four classes of enzymes: pectin lyase, polygalacturonase, pectin methylesterase and rhamnogalacturonase. Among pectinolytic enzymes, pectin lyase is the most important in depolymerization of pectin, since it cleaves internal glycosidic bonds of highly methylated pectins. Favors pectate, the anion, over pectin, the methyl ester. The sequence is that of Probable pectate lyase C (plyC) from Aspergillus oryzae (strain ATCC 42149 / RIB 40) (Yellow koji mold).